The primary structure comprises 551 residues: Cleavage and polyadenylation specificity factor subunit 6 (551 aa).

Residues 81–161 form the RRM domain; that stretch reads IALYIGNLTW…QNPVVTPCNK (81 aa). Threonine 157 carries the phosphothreonine modification. Positions 169–180 are enriched in polar residues; the sequence is MQSRKTTQSGQM. Disordered regions lie at residues 169–410 and 477–551; these read MQSR…TPLS and LHGI…YRHR. 3 stretches are compositionally biased toward pro residues: residues 237-265, 285-366, and 377-388; these read TRPP…PLAG, GQPP…PPPA, and GPPPTDPYGRPP. 2 stretches are compositionally biased toward basic and acidic residues: residues 389–404 and 489–503; these read PYDR…EMDA and SRRE…SRSR. Serine 494, serine 500, serine 511, serine 513, and serine 525 each carry phosphoserine. Over residues 504 to 514 the composition is skewed to basic residues; that stretch reads EKSRRHKSRSR. A compositionally biased stretch (basic and acidic residues) spans 515–551; it reads DRHDDYYRERSRERERHRDRDRDRDRERDREREYRHR.

It belongs to the RRM CPSF6/7 family. As to quaternary structure, component of the cleavage factor Im (CFIm) complex.

Its subcellular location is the nucleus. The protein localises to the nucleoplasm. It localises to the nucleus speckle. It is found in the cytoplasm. Component of the cleavage factor Im (CFIm) complex that functions as an activator of the pre-mRNA 3'-end cleavage and polyadenylation processing required for the maturation of pre-mRNA into functional mRNAs. CFIm contributes to the recruitment of multiprotein complexes on specific sequences on the pre-mRNA 3'-end, so called cleavage and polyadenylation signals (pA signals). Most pre-mRNAs contain multiple pA signals, resulting in alternative cleavage and polyadenylation (APA) producing mRNAs with variable 3'-end formation. The CFIm complex acts as a key regulator of cleavage and polyadenylation site choice during APA through its binding to 5'-UGUA-3' elements localized in the 3'-untranslated region (UTR) for a huge number of pre-mRNAs. Plays a role in mRNA export. In Gallus gallus (Chicken), this protein is Cleavage and polyadenylation specificity factor subunit 6.